We begin with the raw amino-acid sequence, 213 residues long: MVEKTILEAVKKVVEESPKRNFSESVDLAINLKNLDMNQPKNRVDEEVILPHGLGKELKIGVFAKGDVGLKAKAAGAAYVISDVELEELAADKNRARVLANECDLFIAETQFMPIIGKNLGIVLGPRGKMPIPLMPNKDVGELIQSKQNAVKLRSKDRLTFHVAVGRRDMNPEDLAENIETIMSRLERVLDKGKHNLRTVYVTTTMGKSERVV.

This sequence belongs to the universal ribosomal protein uL1 family. Part of the 50S ribosomal subunit.

Its function is as follows. Binds directly to 23S rRNA. Probably involved in E site tRNA release. In terms of biological role, protein L1 is also a translational repressor protein, it controls the translation of its operon by binding to its mRNA. This Methanosarcina acetivorans (strain ATCC 35395 / DSM 2834 / JCM 12185 / C2A) protein is Large ribosomal subunit protein uL1.